Consider the following 258-residue polypeptide: Maintenance of carboxysome distribution protein A (258 aa).

Residues G11, G12, Q13, G14, K15, T16, T17, Q40, E147, K151, F182, R183, L216, E217, S218, and Y221 each coordinate ATP. T16 provides a ligand contact to Mg(2+).

The protein belongs to the ParA family. McdA subfamily. In terms of assembly, homodimerizes in the presence of ATP, making extra nucleotide contacts than with ADP or AMP-PNP. Each subunit binds 1 ATP molecule; Glu-147, Lys-151 and Arg-183 cross the dimer interface to contact ATP in the other subunit, while Phe-182, Arg-183 and Tyr-221 stack with the adenine base in their own subunit. Forms a complex with McdB.

The protein resides in the cytoplasm. Its subcellular location is the nucleoid. It carries out the reaction ATP + H2O = ADP + phosphate + H(+). In terms of biological role, mcdA and McdB together mediate carboxysome (Cb) spacing, size, ultrastructure and probably inheritance in the cell, together they prevent Cb aggregation. McdA is an ATPase that forms dynamic gradients on the nucleoid in response to adapter protein McdB, which associates with carboxysomes. The interplay between McdA gradients on the nucleoid and McdB-bound carboxysomes result in the equal spacing of Cbs along the cell length. Binds DNA saturably and strongly in the presence of Mg(2+)ATP; without ATP, DNA-binding is very poor (tested with a mutant that should not be able to hydrolyze ATP, Asp-38-Ala). Decreasing the NaCl concentration increases DNA binding. Its function is as follows. Incorrect positioning (aggregation) of carboxysomes results in reduced CO(2) fixation by encapsulated ribulose-1,5-bisphosphate carboxylase (RuBisCO, cbbL/cbbS), which leads to slower growth. This Gloeothece citriformis (strain PCC 7424) (Cyanothece sp. (strain PCC 7424)) protein is Maintenance of carboxysome distribution protein A.